We begin with the raw amino-acid sequence, 159 residues long: NADH-quinone oxidoreductase subunit B (159 aa).

[4Fe-4S] cluster is bound by residues cysteine 37, cysteine 38, cysteine 102, and cysteine 132.

Belongs to the complex I 20 kDa subunit family. In terms of assembly, NDH-1 is composed of 14 different subunits. Subunits NuoB, C, D, E, F, and G constitute the peripheral sector of the complex. [4Fe-4S] cluster is required as a cofactor.

Its subcellular location is the cell inner membrane. It carries out the reaction a quinone + NADH + 5 H(+)(in) = a quinol + NAD(+) + 4 H(+)(out). NDH-1 shuttles electrons from NADH, via FMN and iron-sulfur (Fe-S) centers, to quinones in the respiratory chain. The immediate electron acceptor for the enzyme in this species is believed to be ubiquinone. Couples the redox reaction to proton translocation (for every two electrons transferred, four hydrogen ions are translocated across the cytoplasmic membrane), and thus conserves the redox energy in a proton gradient. The polypeptide is NADH-quinone oxidoreductase subunit B (Variovorax paradoxus (strain S110)).